The primary structure comprises 894 residues: DNA mismatch repair protein MutS (894 aa).

632-639 (GPNMGGKS) contacts ATP.

It belongs to the DNA mismatch repair MutS family.

Its function is as follows. This protein is involved in the repair of mismatches in DNA. It is possible that it carries out the mismatch recognition step. This protein has a weak ATPase activity. The polypeptide is DNA mismatch repair protein MutS (Paraburkholderia phytofirmans (strain DSM 17436 / LMG 22146 / PsJN) (Burkholderia phytofirmans)).